The sequence spans 622 residues: MSTSSSDPFYNFAKTSFKSAAAQKASATSLPPLPGPDQKVPGMDIKYDVVIVGSGPIGCTYARELVEAGYKVAMFDIGEIDSGLKIGAHKKNTVEYQKNIDKFVNVIQGQLMSVSVPVNKLVVDTLSPTSWQASTFFVRNGSNPEQDPLRNLSGQAVTRVVGGMSTHWTCATPRFDREQRPLLVKDDPDADDAIWDQLYTKAESYFKTGTDQFNESIRHNLVLNKLAEEYKGQRTFQQIPLAATRRNPTFVEWSSANTVFDLQNRPNIDAPEERFNLFPAVACERVMRNASNTAIESLHIRDLISGDRFAIQADVYVLTAGAVHNTQLLVNSGFGKLGRPDPANPPELLPFLGSYITEQSLVFCQTVMSTELIDSVKSDMTIIGNPGELGYSVSYMPGASTNKHPDWWNEKVQNHMMQHQEDPLPIPFEDPEPQVTTLFQPSHPWHTQIHRDAFSYGAVQQSIDSRLIVDWRFFGRTEPKEENKLWFSDKITDAYNMPQPTFDFRFPAGRTSQEAEDMMTDMCVMSAKIGGFLPGSLPQFMEPGLVLHLGGTHRMGFDEQEDNCCVDTDSRVFGFNNLFLGGCGNIPTAYGANPTLTAMSLAIKSCEYIKKNFTPSPFTPAQ.

The first 28 residues, 1-28 (MSTSSSDPFYNFAKTSFKSAAAQKASAT), serve as a signal peptide directing secretion. Residues 29 to 38 (SLPPLPGPDQ) constitute a propeptide that is removed on maturation. At His-167 the chain carries Tele-8alpha-FAD histidine. Residues Gln-448 and His-450 each contribute to the substrate site. Catalysis depends on His-548, which acts as the Proton acceptor. The active site involves Asn-593.

This sequence belongs to the GMC oxidoreductase family. As to quaternary structure, homotetramer. Requires FAD as cofactor.

Its subcellular location is the periplasm. It catalyses the reaction D-glucose + O2 = 2-dehydro-D-glucose + H2O2. Its function is as follows. Catalyzes the oxidation of various aldopyranoses and disaccharides on carbon-2 to the corresponding 2-keto sugars concomitant with the reduction of O(2) to H(2)O(2). Plays an important role in lignin degradation of wood rot fungi by supplying the essential cosubstrate H(2)O(2) for the ligninolytic peroxidases, lignin peroxidase and manganese-dependent peroxidase. The sequence is that of Pyranose 2-oxidase (p2ox) from Trametes pubescens (White-rot fungus).